The following is a 518-amino-acid chain: Probable bifunctional methylthioribulose-1-phosphate dehydratase/enolase-phosphatase E1 (518 aa).

Residues 1 to 247 (MAAAPPAVAV…AIKLHQIGLD (247 aa)) are methylthioribulose-1-phosphate dehydratase. Residue cysteine 119 participates in substrate binding. Histidine 137 and histidine 139 together coordinate Zn(2+). Glutamate 162 acts as the Proton donor/acceptor; for methylthioribulose-1-phosphate dehydratase activity in catalysis. A Zn(2+)-binding site is contributed by histidine 212. Positions 279 to 518 (IVLDIEGTTT…FKTITSFAEI (240 aa)) are enolase-phosphatase E1. Aspartate 282 and glutamate 284 together coordinate Mg(2+). Substrate contacts are provided by residues 417–418 (SS) and lysine 451. Aspartate 477 provides a ligand contact to Mg(2+).

It in the N-terminal section; belongs to the aldolase class II family. MtnB subfamily. In the C-terminal section; belongs to the HAD-like hydrolase superfamily. MasA/MtnC family. The cofactor is Zn(2+). Mg(2+) serves as cofactor.

The catalysed reaction is 5-(methylsulfanyl)-D-ribulose 1-phosphate = 5-methylsulfanyl-2,3-dioxopentyl phosphate + H2O. It catalyses the reaction 5-methylsulfanyl-2,3-dioxopentyl phosphate + H2O = 1,2-dihydroxy-5-(methylsulfanyl)pent-1-en-3-one + phosphate. It functions in the pathway amino-acid biosynthesis; L-methionine biosynthesis via salvage pathway; L-methionine from S-methyl-5-thio-alpha-D-ribose 1-phosphate: step 2/6. Its pathway is amino-acid biosynthesis; L-methionine biosynthesis via salvage pathway; L-methionine from S-methyl-5-thio-alpha-D-ribose 1-phosphate: step 3/6. The protein operates within amino-acid biosynthesis; L-methionine biosynthesis via salvage pathway; L-methionine from S-methyl-5-thio-alpha-D-ribose 1-phosphate: step 4/6. This chain is Probable bifunctional methylthioribulose-1-phosphate dehydratase/enolase-phosphatase E1, found in Populus trichocarpa (Western balsam poplar).